We begin with the raw amino-acid sequence, 386 residues long: Dual-specificity RNA methyltransferase RlmN (386 aa).

Glu-96 (proton acceptor) is an active-site residue. A Radical SAM core domain is found at 102–340 (ENDRATLCVS…VITRRTRGED (239 aa)). A disulfide bond links Cys-109 and Cys-345. Positions 116, 120, and 123 each coordinate [4Fe-4S] cluster. S-adenosyl-L-methionine contacts are provided by residues 170 to 171 (GE), Ser-202, 224 to 226 (SIH), and Asn-302. Catalysis depends on Cys-345, which acts as the S-methylcysteine intermediate.

This sequence belongs to the radical SAM superfamily. RlmN family. It depends on [4Fe-4S] cluster as a cofactor.

The protein resides in the cytoplasm. It catalyses the reaction adenosine(2503) in 23S rRNA + 2 reduced [2Fe-2S]-[ferredoxin] + 2 S-adenosyl-L-methionine = 2-methyladenosine(2503) in 23S rRNA + 5'-deoxyadenosine + L-methionine + 2 oxidized [2Fe-2S]-[ferredoxin] + S-adenosyl-L-homocysteine. The catalysed reaction is adenosine(37) in tRNA + 2 reduced [2Fe-2S]-[ferredoxin] + 2 S-adenosyl-L-methionine = 2-methyladenosine(37) in tRNA + 5'-deoxyadenosine + L-methionine + 2 oxidized [2Fe-2S]-[ferredoxin] + S-adenosyl-L-homocysteine. Its function is as follows. Specifically methylates position 2 of adenine 2503 in 23S rRNA and position 2 of adenine 37 in tRNAs. m2A2503 modification seems to play a crucial role in the proofreading step occurring at the peptidyl transferase center and thus would serve to optimize ribosomal fidelity. The protein is Dual-specificity RNA methyltransferase RlmN of Colwellia psychrerythraea (strain 34H / ATCC BAA-681) (Vibrio psychroerythus).